Here is a 464-residue protein sequence, read N- to C-terminus: Asparagine--tRNA ligase (464 aa).

It belongs to the class-II aminoacyl-tRNA synthetase family. Homodimer.

The protein resides in the cytoplasm. The enzyme catalyses tRNA(Asn) + L-asparagine + ATP = L-asparaginyl-tRNA(Asn) + AMP + diphosphate + H(+). In Xanthomonas campestris pv. campestris (strain 8004), this protein is Asparagine--tRNA ligase.